The primary structure comprises 802 residues: Receptor-type tyrosine-protein phosphatase alpha (802 aa).

The signal sequence occupies residues 1–19 (MDSWFILVLLGSGLICVSA). Residues 20–151 (NNATTVAPSV…DSKDRRDETP (132 aa)) lie on the Extracellular side of the membrane. 2 N-linked (GlcNAc...) asparagine glycosylation sites follow: N21 and N36. A disordered region spans residues 39–59 (TAEPVKEEAKTSNPTSSLTSL). N-linked (GlcNAc...) asparagine glycans are attached at residues N68, N80, N86, N104, and N124. Polar residues-rich tracts occupy residues 79–115 (VNSSDSDNGTTRTASTNSIGITISPNGTWLPDNQFTD) and 123–141 (GNSSTAATTPETFPPSGNS). Residues 79–146 (VNSSDSDNGT…PSGNSDSKDR (68 aa)) form a disordered region. The chain crosses the membrane as a helical span at residues 152–174 (IIAVMVALSSLLVIVFIIIVLYM). Residues 175–802 (LRFKKYKQAG…DAFSDYANFK (628 aa)) lie on the Cytoplasmic side of the membrane. A phosphoserine mark is found at S211 and S213. Tyrosine-protein phosphatase domains follow at residues 241–501 (FREE…LLEH) and 533–791 (LEEE…VQEY). Substrate contacts are provided by residues D410, 442–448 (CSAGVGR), and Q486. C442 functions as the Phosphocysteine intermediate in the catalytic mechanism. Residue C732 is the Phosphocysteine intermediate of the active site. Residue Y798 is modified to Phosphotyrosine.

Belongs to the protein-tyrosine phosphatase family. Receptor class 4 subfamily. As to quaternary structure, part of a complex comprised of PTPRA, BCAR1, BCAR3 (via SH2 domain), and SRC. Within the complex, interacts (when phosphorylated on Tyr-798) with BCAR3 (via SH2 domain). Interacts with GRB2. Post-translationally, integrin binding to extracellular matrix induces phosphorylation at Tyr-798 which induces PTPRA localization and recruitment of BCAR3, BCAR1 and CRK to focal adhesions.

It localises to the cell membrane. It is found in the cell junction. Its subcellular location is the focal adhesion. The catalysed reaction is O-phospho-L-tyrosyl-[protein] + H2O = L-tyrosyl-[protein] + phosphate. Functionally, tyrosine protein phosphatase which is involved in integrin-mediated focal adhesion formation. Following integrin engagement, specifically recruits BCAR3, BCAR1 and CRK to focal adhesions thereby promoting SRC-mediated phosphorylation of BRAC1 and the subsequent activation of PAK and small GTPase RAC1 and CDC42. The polypeptide is Receptor-type tyrosine-protein phosphatase alpha (PTPRA) (Homo sapiens (Human)).